The chain runs to 916 residues: Internalin J (916 aa).

An N-terminal signal peptide occupies residues 1 to 25; sequence MKTSKIIIASLVSLTLVSNPILTFA. LRR repeat units follow at residues 94 to 115, 116 to 136, 137 to 157, 158 to 179, 180 to 200, 201 to 221, 222 to 243, 244 to 263, 264 to 284, 285 to 306, 316 to 325, 338 to 357, 359 to 368, and 380 to 402; these read TLTS…EKLT, GLTK…SQNT, NLTY…TPLT, KLTY…QNPL, LTYL…HNTQ, LTEL…TPQT, QLTT…QNKL, LNRL…NQNI, QLTF…TPLT, QLTY…TLSK, DLLEIDLTHN, KIKE…DCQA, GITELDLSQN, and ELTK…NAHI. MucBP domains are found at residues 506-568, 576-638, 646-708, 717-779, and 787-849; these read PIKG…SQSV, IVAA…SQTV, IVAA…AQTV, and APEK…SQTV. Residues 862–888 are disordered; the sequence is PLPDKKTTKPSNLKTTEVKKASDTLPK. The LPXTG sorting signal signature appears at 886–890; that stretch reads LPKTG. Position 889 is a pentaglycyl murein peptidoglycan amidated threonine (Thr-889). The propeptide at 890–916 is removed by sortase; the sequence is GDSTPWKSALLGVFLSSTALVIWKKKK.

The protein belongs to the internalin family.

The protein localises to the secreted. It is found in the cell wall. In terms of biological role, involved in several steps of L.monocytogenes infection, probably improves adhesin to host cells. This chain is Internalin J (inlJ), found in Listeria monocytogenes serotype 4b (strain F2365).